Here is a 216-residue protein sequence, read N- to C-terminus: Ribosomal RNA small subunit methyltransferase G (216 aa).

S-adenosyl-L-methionine-binding positions include glycine 73, leucine 78, 124-125 (AE), and arginine 139.

It belongs to the methyltransferase superfamily. RNA methyltransferase RsmG family.

Its subcellular location is the cytoplasm. Specifically methylates the N7 position of guanine in position 518 of 16S rRNA. This chain is Ribosomal RNA small subunit methyltransferase G, found in Pseudarthrobacter chlorophenolicus (strain ATCC 700700 / DSM 12829 / CIP 107037 / JCM 12360 / KCTC 9906 / NCIMB 13794 / A6) (Arthrobacter chlorophenolicus).